Reading from the N-terminus, the 72-residue chain is Disintegrin cereberin (72 aa).

Residues 1–72 form the Disintegrin domain; sequence EAGEECDCGS…SADCPRNRFH (72 aa). 6 disulfide bridges follow: C6–C21, C8–C16, C15–C38, C29–C35, C34–C59, and C47–C66. The Cell attachment site motif lies at 51–53; the sequence is RGD. The interval 51 to 72 is disordered; it reads RGDNPDDRCTGQSADCPRNRFH.

It belongs to the venom metalloproteinase (M12B) family. P-II subfamily. P-IIa sub-subfamily. In terms of assembly, monomer (disintegrin). As to expression, expressed by the venom gland.

Its subcellular location is the secreted. Its function is as follows. Inhibits fibrinogen interaction with platelet. Acts by binding to alpha-IIb/beta-3 (ITGA2B/ITGB3) on the platelet surface and inhibits aggregation induced by ADP, thrombin, platelet-activating factor and collagen. The sequence is that of Disintegrin cereberin from Crotalus cerberus (Arizona black rattlesnake).